The sequence spans 136 residues: Large ribosomal subunit protein uL16 (136 aa).

It belongs to the universal ribosomal protein uL16 family. As to quaternary structure, part of the 50S ribosomal subunit.

In terms of biological role, binds 23S rRNA and is also seen to make contacts with the A and possibly P site tRNAs. The sequence is that of Large ribosomal subunit protein uL16 from Mesomycoplasma hyopneumoniae (strain 232) (Mycoplasma hyopneumoniae).